The following is a 184-amino-acid chain: Phosphodiesterase YfcE (184 aa).

Mn(2+) is bound by residues Asp9, His11, Asp37, Asn73, His105, His127, and His129.

Belongs to the metallophosphoesterase superfamily. YfcE family. The cofactor is Mn(2+).

In terms of biological role, shows phosphodiesterase activity. This Escherichia coli O157:H7 protein is Phosphodiesterase YfcE (yfcE).